Reading from the N-terminus, the 201-residue chain is UPF0301 protein RHE_CH00966 (201 aa).

Belongs to the UPF0301 (AlgH) family.

In Rhizobium etli (strain ATCC 51251 / DSM 11541 / JCM 21823 / NBRC 15573 / CFN 42), this protein is UPF0301 protein RHE_CH00966.